Reading from the N-terminus, the 1829-residue chain is Afadin (1829 aa).

In terms of domain architecture, Ras-associating 1 spans 39-133; it reads FHGVMRFYFQ…GRFVLKNEND (95 aa). Positions 129 to 196 are disordered; the sequence is KNENDAIPAK…PSQGDDSENS (68 aa). The stretch at 146–186 forms a coiled coil; that stretch reads EKQEKEGVIQNFKRTLSKKEKKEKKKREKEALRQASDKEER. The segment covering 160–172 has biased composition (basic residues); sequence TLSKKEKKEKKKR. The span at 173–189 shows a compositional bias: basic and acidic residues; it reads EKEALRQASDKEERPSQ. Residues Ser-216, Ser-246, and Ser-256 each carry the phosphoserine modification. In terms of domain architecture, Ras-associating 2 spans 246 to 348; that stretch reads SGGTLRIYAD…LVFQLKRRPP (103 aa). Residues 356-371 show a composition bias toward basic and acidic residues; the sequence is KKHVEGKPLKGKDRAD. Residues 356 to 377 are disordered; that stretch reads KKHVEGKPLKGKDRADGSGYGS. Ser-391 and Ser-424 each carry phosphoserine. The 67-residue stretch at 441–507 folds into the FHA domain; that stretch reads FGPGIQPHHC…KFVDPIQDHV (67 aa). Phosphoserine occurs at positions 512, 557, 562, 589, and 655. The segment at 539-595 is disordered; sequence DIHSGTALPASRSTTRLDSDRVSSASSTAERGMVKPMIRLDQEQDYRRRESRTQDAA. The segment covering 576–591 has biased composition (basic and acidic residues); it reads IRLDQEQDYRRRESRT. A Dilute domain is found at 668–915; that stretch reads NKMVSMMEGV…IENVVAVAEN (248 aa). Residues 1014-1100 enclose the PDZ domain; sequence VITVTLKKQN…VVTLEVAKQG (87 aa). Ser-1090, Ser-1114, Ser-1133, Ser-1147, Ser-1150, Ser-1179, Ser-1180, Ser-1189, and Ser-1206 each carry phosphoserine. The disordered stretch occupies residues 1114 to 1230; the sequence is SPMMQRISDR…PRPEAYPIPT (117 aa). The segment covering 1120 to 1135 has biased composition (basic and acidic residues); it reads ISDRRGSGKPRPKSEG. A compositionally biased stretch (polar residues) spans 1139–1150; sequence YNNSAQNGSPES. Residues 1159–1179 are compositionally biased toward basic and acidic residues; sequence SEPKKLPGDDRLMKNRADHRS. A compositionally biased stretch (polar residues) spans 1195 to 1217; the sequence is PYTSGTAAKITSVSTGNLCTEEQ. Phosphothreonine is present on residues Thr-1218 and Thr-1239. Residues Ser-1245 and Ser-1282 each carry the phosphoserine modification. Over residues 1300-1309 the composition is skewed to basic and acidic residues; that stretch reads ESGMDRKCDS. 2 disordered regions span residues 1300–1533 and 1574–1724; these read ESGM…EKQQ and RLQE…KTQV. Over residues 1316–1325 the composition is skewed to low complexity; it reads SSSVESSTSS. Polar residues predominate over residues 1332–1344; the sequence is SSKSVTPASTLTK. Residue Ser-1335 is modified to Phosphoserine. Position 1337 is a phosphothreonine (Thr-1337). Over residues 1371 to 1380 the composition is skewed to pro residues; sequence LPPPPPPPPA. Residues 1401-1412 are compositionally biased toward low complexity; that stretch reads NQAAPQSAQVAA. Basic and acidic residues predominate over residues 1413–1447; sequence AERKKREEHQRWYEKEKARLEEERERKRREQERKL. The stretch at 1417–1454 forms a coiled coil; the sequence is KREEHQRWYEKEKARLEEERERKRREQERKLGQMRTQS. The segment covering 1450-1464 has biased composition (polar residues); it reads MRTQSLNPASFSPLA. Over residues 1494–1510 the composition is skewed to basic and acidic residues; sequence TIERRDLQYITISKEEL. Phosphoserine occurs at positions 1506 and 1517. Residues 1520–1533 show a composition bias toward basic and acidic residues; that stretch reads PWKRDAREKLEKQQ. Residues 1530 to 1564 adopt a coiled-coil conformation; it reads EKQQQMHIVDMLSKEIHELQNKGDRTAEESDRLRK. Positions 1583 to 1594 are enriched in acidic residues; it reads EDDDEEEDDDVD. Residues 1600-1672 adopt a coiled-coil conformation; it reads QRLEAERRAR…SRLEAERRRQ (73 aa). Residues 1602 to 1682 show a composition bias toward basic and acidic residues; it reads LEAERRARLQ…HEEAARRLLE (81 aa). Phosphoserine is present on Ser-1701. Polar residues predominate over residues 1715-1724; sequence RNASYLKTQV. Ser-1726 is subject to Phosphoserine. Residues 1742 to 1829 are disordered; sequence DEEENYVPAG…TELENELNTK (88 aa). Positions 1753 to 1764 are enriched in polar residues; that stretch reads NSYSGSAGTTAG. Positions 1768 to 1781 are enriched in basic and acidic residues; it reads APRDTREKLSRSQD. Phosphoserine occurs at positions 1779 and 1804. Residues 1809-1829 show a composition bias toward basic and acidic residues; it reads VSDKVKASRKLTELENELNTK. Lys-1812 is modified (N6-acetyllysine).

In terms of assembly, homodimer. Interacts with F-actin, nectin and NECTIN3. Essential for the association of nectin and E-cadherin. Isoform 2/s-afadin does not interact with F-actin. Interacts with ZO-1 and occludin, but probably in an indirect manner. Interacts with RIT1, RIT2, NRXN1 and BCR. Interacts with ADAM10; the interaction locks ADAM10 at adherens junctions following ADAM10 recruitment to adherens junctions by TSPAN33. Isoform 1 is widely expressed, including in heart, brain, spleen, lung, liver, skeletal muscle, kidney and testis. Isoform 2 is mainly expressed in the brain.

It localises to the cell junction. The protein resides in the adherens junction. Belongs to an adhesion system, probably together with the E-cadherin-catenin system, which plays a role in the organization of homotypic, interneuronal and heterotypic cell-cell adherens junctions (AJs). Nectin- and actin-filament-binding protein that connects nectin to the actin cytoskeleton. May play a key role in the organization of epithelial structures of the embryonic ectoderm. Essential for the organization of adherens junctions. The protein is Afadin of Rattus norvegicus (Rat).